A 129-amino-acid chain; its full sequence is Transcriptional activator protein (129 aa).

The segment covering 1 to 12 (MRSSSPSQPPSI) has biased composition (low complexity). Positions 1–21 (MRSSSPSQPPSIKKAHRQAKR) are disordered. The Nuclear localization signal signature appears at 13–28 (KKAHRQAKRRAIRRRR). A zinc finger spans residues 33–50 (CGCSIYFHIDCTGHGFTH). The disordered stretch occupies residues 84 to 114 (IHQNEDIPCTNTVQPQPEESVASPQSLPELP). Over residues 92–109 (CTNTVQPQPEESVASPQS) the composition is skewed to polar residues. The transactivation stretch occupies residues 115-129 (SLDDFDDSFWVNLFK).

The protein belongs to the geminiviridae transcriptional activator protein family. As to quaternary structure, monomer. Homodimer. Homooligomer. Self-interaction correlates with nuclear localization and efficient activation of transcription. Monomers suppress local silencing by interacting with and inactivating host adenosine kinase 2 (ADK2) in the cytoplasm. Interacts with and inhibits host SNF1 kinase. Binds to ssDNA. In terms of processing, phosphorylated.

It is found in the host nucleus. It localises to the host cytoplasm. Strong activator of the late viral genes promoters. Enhances the expression of the capsid protein and nuclear shuttle protein. Acts as a suppressor of RNA-mediated gene silencing, also known as post-transcriptional gene silencing (PTGS), a mechanism of plant viral defense that limits the accumulation of viral RNAs. Suppresses the host RNA silencing by inhibiting adenosine kinase 2 (ADK2), a kinase involved in a general methylation pathway. Also suppresses the host basal defense by interacting with and inhibiting SNF1 kinase, a key regulator of cell metabolism implicated in innate antiviral defense. Determines pathogenicity. The sequence is that of Transcriptional activator protein from Abutilon (Upland cotton).